Consider the following 202-residue polypeptide: LexA repressor (202 aa).

Residues 28–48 (QQEIARAFGFRSLGTVRNYLV) constitute a DNA-binding region (H-T-H motif). Active-site for autocatalytic cleavage activity residues include serine 120 and lysine 157.

It belongs to the peptidase S24 family. In terms of assembly, homodimer.

The enzyme catalyses Hydrolysis of Ala-|-Gly bond in repressor LexA.. Functionally, represses a number of genes involved in the response to DNA damage (SOS response), including recA and lexA. In the presence of single-stranded DNA, RecA interacts with LexA causing an autocatalytic cleavage which disrupts the DNA-binding part of LexA, leading to derepression of the SOS regulon and eventually DNA repair. The chain is LexA repressor from Syntrophotalea carbinolica (strain DSM 2380 / NBRC 103641 / GraBd1) (Pelobacter carbinolicus).